Consider the following 198-residue polypeptide: Recombination protein RecR (198 aa).

The C4-type zinc-finger motif lies at 57-72 (CSVCGNLTDEDPCAIC). Positions 80–175 (STILIVEDSR…KVTRLARGLA (96 aa)) constitute a Toprim domain.

The protein belongs to the RecR family.

Functionally, may play a role in DNA repair. It seems to be involved in an RecBC-independent recombinational process of DNA repair. It may act with RecF and RecO. The sequence is that of Recombination protein RecR from Streptococcus sanguinis (strain SK36).